Consider the following 411-residue polypeptide: MNFEHISREDNEIYALIEKELERQQNGIELIASENVASEAVMEAMGSYLTNKYAEGYPGKRYYGGCYVVDGVEEIARERAKELFGAEHANVQPHSGSQANMAVYFTILEHGDTVLGMDLSHGGHLTHGSPVNFSGKLFNFVSYGVDKDTEEINYDVVRELAIKHKPKLIVAGASAYSRIIDFKKFREICDEIGAYLMVDMAHIAGLVAAELHPSPVPYADFVTSTTHKTLRGPRGGLILCKEKYAKDLDKNIFPGMQGGPLMHIIAAKAVCFKEALDPSFKEYMARVVENCKELGEQLVKRGFKLVSNGTDNHLILVDLNNKDITGKDAEKLLDEVGITLNKNTVPNETRSPFVTSGVRIGTAAITTRGFERRDMEEIADIINETIINRDKDLEQYKQRVEALCEKYPLYK.

Residues Leu119 and 123–125 (GHL) each bind (6S)-5,6,7,8-tetrahydrofolate. An N6-(pyridoxal phosphate)lysine modification is found at Lys228. Residue 351–353 (SPF) coordinates (6S)-5,6,7,8-tetrahydrofolate.

The protein belongs to the SHMT family. Homodimer. Pyridoxal 5'-phosphate is required as a cofactor.

Its subcellular location is the cytoplasm. It catalyses the reaction (6R)-5,10-methylene-5,6,7,8-tetrahydrofolate + glycine + H2O = (6S)-5,6,7,8-tetrahydrofolate + L-serine. The protein operates within one-carbon metabolism; tetrahydrofolate interconversion. It participates in amino-acid biosynthesis; glycine biosynthesis; glycine from L-serine: step 1/1. Catalyzes the reversible interconversion of serine and glycine with tetrahydrofolate (THF) serving as the one-carbon carrier. This reaction serves as the major source of one-carbon groups required for the biosynthesis of purines, thymidylate, methionine, and other important biomolecules. Also exhibits THF-independent aldolase activity toward beta-hydroxyamino acids, producing glycine and aldehydes, via a retro-aldol mechanism. In Clostridium botulinum (strain Eklund 17B / Type B), this protein is Serine hydroxymethyltransferase.